Consider the following 659-residue polypeptide: Serine/threonine-protein kinase StkP (659 aa).

Residues 1-342 (MIQIGKIFAG…PQAPKKHRFK (342 aa)) are Cytoplasmic-facing. In terms of domain architecture, Protein kinase spans 12–273 (YRIVKQIGRG…EMYVDLSSSL (262 aa)). Residues 18-26 (IGRGGMADV) and lysine 42 each bind ATP. Aspartate 136 functions as the Proton acceptor in the catalytic mechanism. A helical membrane pass occupies residues 343-363 (MRYLILLASLVLVAASLIWIL). Over 364–659 (SRTPATIAIP…YKPKTTSATP (296 aa)) the chain is Extracellular. PASTA domains follow at residues 366-433 (TPAT…VVSS), 434-505 (GKQS…TVAK), 506-577 (KATT…TVAK), and 578-651 (KVTS…SIYK). The segment at 541 to 561 (EEESSESEPGTIMKQSPGAGT) is disordered.

Belongs to the protein kinase superfamily. Ser/Thr protein kinase family. As to quaternary structure, homodimer. StkP forms dimers through its transmembrane and extracellular domains. Dimer formation likely promotes autophosphorylation activity and might be necessary for targeting StkP substrate. Autophosphorylation occurs predominantly at the threonine residue and weakly at the serine residue. Dephosphorylated by PhpP.

It is found in the cell membrane. The catalysed reaction is L-seryl-[protein] + ATP = O-phospho-L-seryl-[protein] + ADP + H(+). It catalyses the reaction L-threonyl-[protein] + ATP = O-phospho-L-threonyl-[protein] + ADP + H(+). Its function is as follows. Protein kinase involved in signal transduction pathways that regulate various cellular processes. Likely senses intracellular peptidoglycan subunits present in the cell division septa of actively growing cells; thus, intracellular unlinked peptidoglycan may serve as the signal molecules that trigger StkP phosphorylation activity on a set of substrates. Plays a crucial role in the regulation of cell shape and cell division of S.pneumoniae through control of at least DivIVA activity. Is involved in competence triggering, and is required for the expression of the central competence operon comCDE. StkP also plays an important role for bacterial survival in vivo. Identified target substrates that are specifically phosphorylated by StkP in vivo, mainly on threonine residues, are DivIVA, GlmM, PpaC, MapZ, KhpB (also called EloR/Jag, shown in strains R6 and Rx1) and StkP itself. Autophosphorylated StkP is a substrate for the cotranscribed protein phosphatase PhpP (shown in the avirulent strain Rx / Cp1015); PhpP and StkP appear to constitute a functional signaling couple in vivo. The chain is Serine/threonine-protein kinase StkP (stkP) from Streptococcus pneumoniae serotype 2 (strain D39 / NCTC 7466).